Here is a 541-residue protein sequence, read N- to C-terminus: Glucose-6-phosphate isomerase (541 aa).

Glu347 (proton donor) is an active-site residue. Active-site residues include His378 and Lys506.

Belongs to the GPI family.

Its subcellular location is the cytoplasm. It carries out the reaction alpha-D-glucose 6-phosphate = beta-D-fructose 6-phosphate. It participates in carbohydrate biosynthesis; gluconeogenesis. Its pathway is carbohydrate degradation; glycolysis; D-glyceraldehyde 3-phosphate and glycerone phosphate from D-glucose: step 2/4. Functionally, catalyzes the reversible isomerization of glucose-6-phosphate to fructose-6-phosphate. The chain is Glucose-6-phosphate isomerase from Francisella tularensis subsp. holarctica (strain OSU18).